The primary structure comprises 362 residues: Glutaminase-asparaginase (362 aa).

Positions 1–25 (MNAALKTFAPSALALLLILPSSASA) are cleaved as a signal peptide. The Asparaginase/glutaminase domain occupies 35–362 (ANVVILATGG…KELQRIFWEY (328 aa)). Thr45 functions as the Acyl-ester intermediate in the catalytic mechanism. Residues Ser92 and 125 to 126 (TD) contribute to the substrate site.

Belongs to the asparaginase 1 family. Homotetramer.

Its subcellular location is the periplasm. It catalyses the reaction L-glutamine + H2O = L-glutamate + NH4(+). The catalysed reaction is L-asparagine + H2O = L-aspartate + NH4(+). This chain is Glutaminase-asparaginase (ansB), found in Pseudomonas putida (strain ATCC 47054 / DSM 6125 / CFBP 8728 / NCIMB 11950 / KT2440).